The primary structure comprises 525 residues: Bifunctional purine biosynthesis protein PurH (525 aa).

The MGS-like domain maps to 10 to 156 (HRIPIRRALV…KNHPSVAIVT (147 aa)).

Belongs to the PurH family.

It catalyses the reaction (6R)-10-formyltetrahydrofolate + 5-amino-1-(5-phospho-beta-D-ribosyl)imidazole-4-carboxamide = 5-formamido-1-(5-phospho-D-ribosyl)imidazole-4-carboxamide + (6S)-5,6,7,8-tetrahydrofolate. It carries out the reaction IMP + H2O = 5-formamido-1-(5-phospho-D-ribosyl)imidazole-4-carboxamide. It functions in the pathway purine metabolism; IMP biosynthesis via de novo pathway; 5-formamido-1-(5-phospho-D-ribosyl)imidazole-4-carboxamide from 5-amino-1-(5-phospho-D-ribosyl)imidazole-4-carboxamide (10-formyl THF route): step 1/1. The protein operates within purine metabolism; IMP biosynthesis via de novo pathway; IMP from 5-formamido-1-(5-phospho-D-ribosyl)imidazole-4-carboxamide: step 1/1. The polypeptide is Bifunctional purine biosynthesis protein PurH (Nocardioides sp. (strain ATCC BAA-499 / JS614)).